The following is a 232-amino-acid chain: Lipoprotein-releasing system ATP-binding protein LolD (232 aa).

One can recognise an ABC transporter domain in the interval 11 to 232; that stretch reads IEVTDLQRAF…LHDGRLIEEY (222 aa). 47–54 is a binding site for ATP; that stretch reads GPSGAGKS.

This sequence belongs to the ABC transporter superfamily. Lipoprotein translocase (TC 3.A.1.125) family. In terms of assembly, the complex is composed of two ATP-binding proteins (LolD) and two transmembrane proteins (LolC and LolE).

The protein localises to the cell inner membrane. Part of the ABC transporter complex LolCDE involved in the translocation of mature outer membrane-directed lipoproteins, from the inner membrane to the periplasmic chaperone, LolA. Responsible for the formation of the LolA-lipoprotein complex in an ATP-dependent manner. The polypeptide is Lipoprotein-releasing system ATP-binding protein LolD (Zymomonas mobilis subsp. mobilis (strain ATCC 31821 / ZM4 / CP4)).